The chain runs to 278 residues: C-type lectin domain family 1 member A (278 aa).

Residues 1–42 (MLAKYSSTRDMLDADGDTTMSLHSQASATSQRPELGHTEHQR) form a disordered region. The Cytoplasmic portion of the chain corresponds to 1–52 (MLAKYSSTRDMLDADGDTTMSLHSQASATSQRPELGHTEHQRPSSAWRPVAL). The segment covering 18 to 32 (TTMSLHSQASATSQR) has biased composition (polar residues). A helical; Signal-anchor for type II membrane protein membrane pass occupies residues 53–73 (ILLTLCLVLLIGLAALGLVFF). The Extracellular segment spans residues 74 to 278 (QFYQLSNTQQ…LHEPLSRRWR (205 aa)). Residues Asn95 and Asn169 are each glycosylated (N-linked (GlcNAc...) asparagine). The C-type lectin domain occupies 144–258 (HGDKCYQFYK…CRELRRCACE (115 aa)). Cystine bridges form between Cys165–Cys257 and Cys236–Cys249.

It localises to the membrane. The polypeptide is C-type lectin domain family 1 member A (CLEC1A) (Bos taurus (Bovine)).